A 383-amino-acid chain; its full sequence is Acetylornithine deacetylase (383 aa).

His-80 serves as a coordination point for Zn(2+). Residue Asp-82 is part of the active site. Asp-112 is a binding site for Zn(2+). Glu-144 is an active-site residue. Residues Glu-145, Glu-169, and His-355 each coordinate Zn(2+).

The protein belongs to the peptidase M20A family. ArgE subfamily. Homodimer. It depends on Zn(2+) as a cofactor. Co(2+) serves as cofactor. Glutathione is required as a cofactor.

It localises to the cytoplasm. The enzyme catalyses N(2)-acetyl-L-ornithine + H2O = L-ornithine + acetate. Its pathway is amino-acid biosynthesis; L-arginine biosynthesis; L-ornithine from N(2)-acetyl-L-ornithine (linear): step 1/1. Catalyzes the hydrolysis of the amide bond of N(2)-acetylated L-amino acids. Cleaves the acetyl group from N-acetyl-L-ornithine to form L-ornithine, an intermediate in L-arginine biosynthesis pathway, and a branchpoint in the synthesis of polyamines. In Salmonella typhimurium (strain LT2 / SGSC1412 / ATCC 700720), this protein is Acetylornithine deacetylase.